Here is a 733-residue protein sequence, read N- to C-terminus: DNA repair and recombination protein RAD54-like (733 aa).

The segment at 1 to 35 is disordered; it reads LAKRKAGGEEEDGEWRPPATQKRQKAGSEAESADC. Positions 159–334 constitute a Helicase ATP-binding domain; that stretch reads SRRIPGSHGC…FSLVHFVNSG (176 aa). An ATP-binding site is contributed by 172–179; sequence DEMGLGKT. Residues 285–288 carry the DEGH box motif; that stretch reads DEGH. The region spanning 488–642 is the Helicase C-terminal domain; it reads LVLDYILAVT…CVVDEEQDVE (155 aa). Residue K504 is modified to N6-acetyllysine. At S561 the chain carries Phosphoserine; by NEK1.

The protein belongs to the SNF2/RAD54 helicase family. As to quaternary structure, homohexamer. Interacts (via N-terminus) with RAD51. Interacts with NAP1L1. Interacts with BRD9; this interaction orchestrates RAD51-RAD54 complex formation. Acetylated. Acetylation promotes interaction with BRD9, and subsequently with RAD54, which is essential for homologous recombination (HR). Post-translationally, phosphorylated. Phosphorylation at Ser-561 by NEK1 specifically in G2 phase allows efficient removal of RAD51 filaments from DNA. Highly expressed in bursa, thymus, testis, and ovary. Low level of expression seen in all other organs tested.

It localises to the nucleus. Plays an essential role in homologous recombination (HR) which is a major pathway for repairing DNA double-strand breaks (DSBs), single-stranded DNA (ssDNA) gaps, and stalled or collapsed replication forks. Acts as a molecular motor during the homology search and guides RAD51 ssDNA along a donor dsDNA thereby changing the homology search from the diffusion-based mechanism to a motor-guided mechanism. Plays also an essential role in RAD51-mediated synaptic complex formation which consists of three strands encased in a protein filament formed once homology is recognized. Once DNA strand exchange occured, dissociates RAD51 from nucleoprotein filaments formed on dsDNA. This Gallus gallus (Chicken) protein is DNA repair and recombination protein RAD54-like (RAD54L).